The sequence spans 727 residues: MAFQKAVKGTILVGGGALATVLGLSQFAHYRRKQMNLAYVKAADCISEPVNREPPSREAQLLTLQNTSEFDILVIGGGATGSGCALDAVTRGLKTALVERDDFSSGTSSRSTKLIHGGVRYLQKAIMKLDIEQYRMVKEALHERANLLEIAPHLSAPLPIMLPVYKWWQLPYYWVGIKLYDLVAGSNCLKSSYVLSKSRALEHFPMLQKDKLVGAIVYYDGQHNDARMNLAIALTAARYGAATANYMEVVSLLKKTDPQTGKVRVSGARCKDVLTGQEFDVRAKCVINATGPFTDSVRKMDDKDAAAICQPSAGVHIVMPGYYSPESMGLLDPATSDGRVIFFLPWQKMTIAGTTDTPTDVTHHPIPSEEDINFILNEVRNYLSCDVEVRRGDVLAAWSGIRPLVTDPKSADTQSISRNHVVDISESGLITIAGGKWTTYRSMAEDTINAAVKTHNLKAGPSRTVGLFLQGGKDWSPTLYIRLVQDYGLESEVAQHLAATYGDKAFEVAKMASVTGKRWPIVGVRLVSEFPYIEAEVKYGIKEYACTAVDMISRRTRLAFLNVQAAEEALPRIVELMGRELNWDDYKKQEQLETARKFLYYEMGYKSRSEQLTDRSEISLLPSDIDRYKKRFHKFDADQKGFITIVDVQRVLESINVQMDENTLHEILNEVDLNKNGQVELNEFLQLMSAIQKGRVSGSRLAILMKTAEENLDRRVPIPVDRSCGGL.

The N-terminal 42 residues, 1 to 42 (MAFQKAVKGTILVGGGALATVLGLSQFAHYRRKQMNLAYVKA), are a transit peptide targeting the mitochondrion. An FAD-binding site is contributed by 71 to 99 (DILVIGGGATGSGCALDAVTRGLKTALVE). Y601 bears the Phosphotyrosine mark. EF-hand domains are found at residues 623-658 (SDIDRYKKRFHKFDADQKGFITIVDVQRVLESINVQ) and 659-694 (MDENTLHEILNEVDLNKNGQVELNEFLQLMSAIQKG). Ca(2+)-binding residues include D672, N674, N676, Q678, and E683.

This sequence belongs to the FAD-dependent glycerol-3-phosphate dehydrogenase family. Requires FAD as cofactor.

The protein localises to the mitochondrion. It carries out the reaction a quinone + sn-glycerol 3-phosphate = dihydroxyacetone phosphate + a quinol. It functions in the pathway polyol metabolism; glycerol degradation via glycerol kinase pathway; glycerone phosphate from sn-glycerol 3-phosphate (anaerobic route): step 1/1. With respect to regulation, calcium-binding enhance the activity of the enzyme. Functionally, calcium-responsive mitochondrial glycerol-3-phosphate dehydrogenase which seems to be a key component of the pancreatic beta-cell glucose-sensing device. The chain is Glycerol-3-phosphate dehydrogenase, mitochondrial from Homo sapiens (Human).